Here is a 314-residue protein sequence, read N- to C-terminus: Porphobilinogen deaminase (314 aa).

S-(dipyrrolylmethanemethyl)cysteine is present on Cys-243.

This sequence belongs to the HMBS family. Monomer. Dipyrromethane serves as cofactor.

It carries out the reaction 4 porphobilinogen + H2O = hydroxymethylbilane + 4 NH4(+). The protein operates within porphyrin-containing compound metabolism; protoporphyrin-IX biosynthesis; coproporphyrinogen-III from 5-aminolevulinate: step 2/4. In terms of biological role, tetrapolymerization of the monopyrrole PBG into the hydroxymethylbilane pre-uroporphyrinogen in several discrete steps. This chain is Porphobilinogen deaminase, found in Bordetella bronchiseptica (strain ATCC BAA-588 / NCTC 13252 / RB50) (Alcaligenes bronchisepticus).